The sequence spans 370 residues: Protein-tyrosine sulfotransferase 1 (370 aa).

The Cytoplasmic segment spans residues 1–8 (MVGKLKQN). Residues 9-25 (LLLACLVISSVTVFYLG) traverse the membrane as a helical; Signal-anchor for type II membrane protein segment. Residues 26–370 (QHAMECHHRI…KEKPQTEQVE (345 aa)) lie on the Lumenal side of the membrane. Asparagine 60 carries N-linked (GlcNAc...) asparagine glycosylation. 79–83 (RSGTT) lines the 3'-phosphoadenylyl sulfate pocket. Cysteine 97 and cysteine 157 are joined by a disulfide. Catalysis depends on glutamate 100, which acts as the Proton donor/acceptor. Residues 102–106 (RVIPR) form an interaction with peptide substrate region. Residues arginine 184, serine 192, and arginine 196 each coordinate 3'-phosphoadenylyl sulfate. Cysteine 226 and cysteine 234 are joined by a disulfide. A 3'-phosphoadenylyl sulfate-binding site is contributed by tyrosine 239. N-linked (GlcNAc...) asparagine glycosylation is present at asparagine 262. Residues 286–295 (STDQVIKPVN) and lysine 301 contribute to the 3'-phosphoadenylyl sulfate site.

Belongs to the protein sulfotransferase family. In terms of assembly, homodimer. Can also form heterodimers with TPST2. Post-translationally, N-glycosylated. As to expression, ubiquitous. Detected in heart, brain, placenta, lung, liver, skeletal muscle, kidney and pancreas.

The protein resides in the golgi apparatus membrane. It carries out the reaction L-tyrosyl-[protein] + 3'-phosphoadenylyl sulfate = O-sulfo-L-tyrosine-[protein] + adenosine 3',5'-bisphosphate + H(+). Functionally, catalyzes the O-sulfation of tyrosine residues within acidic motifs of polypeptides, using 3'-phosphoadenylyl sulfate (PAPS) as cosubstrate. The chain is Protein-tyrosine sulfotransferase 1 (TPST1) from Homo sapiens (Human).